We begin with the raw amino-acid sequence, 140 residues long: UPF0336 protein TW736 (140 aa).

It belongs to the UPF0336 family.

This Tropheryma whipplei (strain TW08/27) (Whipple's bacillus) protein is UPF0336 protein TW736.